Reading from the N-terminus, the 151-residue chain is MSRLIHLSFVLALLACLTGPISANPIDDDRERLNQLLSNPEPADDAELLRNTQEAIALYKKHASRTLPGHQVELDLDRDIRAFETEHLTVDGLPIQGGVWDLIKRGADKVPDEVKDQAKELAKTTAKVLFNKLTEYLKKKISGEDAEKKDT.

A signal peptide spans 1–23 (MSRLIHLSFVLALLACLTGPISA).

Belongs to the Turandot family.

Its subcellular location is the secreted. A humoral factor that may play a role in stress tolerance. This Drosophila pseudoobscura pseudoobscura (Fruit fly) protein is Protein Turandot Z.